Reading from the N-terminus, the 484-residue chain is Acetyl-coenzyme A carboxylase carboxyl transferase subunit beta, chloroplastic (484 aa).

In terms of domain architecture, CoA carboxyltransferase N-terminal spans 223–484 (LWIQCDNCYG…LHAFFPLNKN (262 aa)). Zn(2+) is bound by residues cysteine 227, cysteine 230, cysteine 243, and cysteine 246. A C4-type zinc finger spans residues 227-246 (CDNCYGLMYKKVKINVCEQC).

The protein belongs to the AccD/PCCB family. In terms of assembly, acetyl-CoA carboxylase is a heterohexamer composed of biotin carboxyl carrier protein, biotin carboxylase and 2 subunits each of ACCase subunit alpha and ACCase plastid-coded subunit beta (accD). Zn(2+) is required as a cofactor.

It is found in the plastid. Its subcellular location is the chloroplast stroma. It carries out the reaction N(6)-carboxybiotinyl-L-lysyl-[protein] + acetyl-CoA = N(6)-biotinyl-L-lysyl-[protein] + malonyl-CoA. It functions in the pathway lipid metabolism; malonyl-CoA biosynthesis; malonyl-CoA from acetyl-CoA: step 1/1. Its function is as follows. Component of the acetyl coenzyme A carboxylase (ACC) complex. Biotin carboxylase (BC) catalyzes the carboxylation of biotin on its carrier protein (BCCP) and then the CO(2) group is transferred by the transcarboxylase to acetyl-CoA to form malonyl-CoA. This chain is Acetyl-coenzyme A carboxylase carboxyl transferase subunit beta, chloroplastic, found in Capsella bursa-pastoris (Shepherd's purse).